The primary structure comprises 405 residues: Protein NCA1 (405 aa).

Positions 1–85 (MTTTSVCPFS…GNLNKDSTDS (85 aa)) are disordered. 2 stretches are compositionally biased toward basic and acidic residues: residues 13–24 (ARPDDGSTRKQG) and 37–48 (ARPDDASARKQG). The span at 76–85 (GNLNKDSTDS) shows a compositional bias: polar residues. An RING-type zinc finger spans residues 108–142 (CMLCQALLYESSRCVPCTHVFCKVCLTRFKDCPLC). TPR repeat units lie at residues 247 to 280 (GAVLGMLGDCSRAMGDSSSAVKHFEESVEFLMKL) and 292 to 325 (SVSLNKIGDLKYYDEDLQAARSYYDRALNVRRDA).

Interacts with the catalases CAT1, CAT2 and CAT3. This interaction is not induced by alkaline stress or H(2)O(2) and NaCl treatments. In terms of tissue distribution, expressed in roots, stems, leaves, flowers and siliques.

It is found in the cytoplasm. The protein localises to the nucleus. Its function is as follows. Has holdase chaperone activity that may fold catalase to a functional structure. Not required for the peroxisome import of catalases. Required for the activity of catalases and acts mainly at the post-transcriptional level. In Arabidopsis thaliana (Mouse-ear cress), this protein is Protein NCA1.